Reading from the N-terminus, the 688-residue chain is Methionine--tRNA ligase (688 aa).

The short motif at 13-23 (PYANGNFHIGH) is the 'HIGH' region element. Zn(2+) contacts are provided by Cys-144, Cys-147, Cys-157, and Cys-160. Residues 342-346 (KMSKS) carry the 'KMSKS' region motif. Residue Lys-345 coordinates ATP. Residues 582 to 688 (DFAKVDLRIA…PGAQPGMRIH (107 aa)) form the tRNA-binding domain.

This sequence belongs to the class-I aminoacyl-tRNA synthetase family. MetG type 1 subfamily. Homodimer. Zn(2+) is required as a cofactor.

The protein resides in the cytoplasm. It carries out the reaction tRNA(Met) + L-methionine + ATP = L-methionyl-tRNA(Met) + AMP + diphosphate. Is required not only for elongation of protein synthesis but also for the initiation of all mRNA translation through initiator tRNA(fMet) aminoacylation. The protein is Methionine--tRNA ligase of Acidovorax sp. (strain JS42).